A 480-amino-acid chain; its full sequence is Ribosomal protein uS12 methylthiotransferase RimO (480 aa).

One can recognise an MTTase N-terminal domain in the interval Leu14 to Ala135. Residues Cys23, Cys59, Cys98, Cys193, Cys197, and Cys200 each coordinate [4Fe-4S] cluster. In terms of domain architecture, Radical SAM core spans Leu179–Arg410. Residues Ala412 to Leu480 enclose the TRAM domain.

It belongs to the methylthiotransferase family. RimO subfamily. Requires [4Fe-4S] cluster as cofactor.

The protein resides in the cytoplasm. The catalysed reaction is L-aspartate(89)-[ribosomal protein uS12]-hydrogen + (sulfur carrier)-SH + AH2 + 2 S-adenosyl-L-methionine = 3-methylsulfanyl-L-aspartate(89)-[ribosomal protein uS12]-hydrogen + (sulfur carrier)-H + 5'-deoxyadenosine + L-methionine + A + S-adenosyl-L-homocysteine + 2 H(+). Catalyzes the methylthiolation of an aspartic acid residue of ribosomal protein uS12. The polypeptide is Ribosomal protein uS12 methylthiotransferase RimO (Nocardioides sp. (strain ATCC BAA-499 / JS614)).